A 676-amino-acid polypeptide reads, in one-letter code: Transcription factor RLM1 (676 aa).

In terms of domain architecture, MADS-box spans 3 to 57 (RRKIEIQRISDDRNRAVTFIKRKAGLFKKAHELSVLCQVDIAVIILGSNNTFYEF). A DNA-binding region (mef2-type) is located at residues 58–87 (SSVDTNDLIYHYQNDKNLLHEVKDPSDYGD). The segment covering 103 to 120 (SSMSNKPSKSNVKGMNQS) has biased composition (polar residues). The tract at residues 103–156 (SSMSNKPSKSNVKGMNQSENDDDENNDEDDDDHGNFERNSNMHSNKKASDKNIP) is disordered. Residue S120 is modified to Phosphoserine. Residues 121–134 (ENDDDENNDEDDDD) show a composition bias toward acidic residues. Residue S164 is modified to Phosphoserine. Over residues 173–183 (DGSEQNKRHPE) the composition is skewed to basic and acidic residues. Disordered stretches follow at residues 173–192 (DGSE…LQHL), 202–318 (ISRT…RRKL), 330–424 (NNNF…PFGS), 472–514 (KKQS…VHDL), and 532–631 (MGPN…NSST). A compositionally biased stretch (polar residues) spans 260–276 (ISPNKFSKPFTNASSRT). Residues 284-295 (NNSGSNNNDNSN) are compositionally biased toward low complexity. Over residues 296–312 (YTQSPSNSLEDSIQQTV) the composition is skewed to polar residues. Composition is skewed to low complexity over residues 334-359 (SSNS…MGSS), 368-381 (SRSS…ASAS), and 399-417 (PNAN…NNNN). S374 and S377 each carry phosphoserine. Residues 472–506 (KKQSQTVPLTTTLTGRPPSTFSGPETSNGPPTGSL) show a composition bias toward polar residues. Positions 539 to 604 (PGNTNNPGTF…NSNNSYYSNN (66 aa)) are enriched in low complexity. Over residues 621–631 (GDSNNQSNSST) the composition is skewed to polar residues.

The protein belongs to the MEF2 family. Can heterodimerize with SPM1. Interacts with KDX1 and SLT2. Phosphorylated by SLT2.

It localises to the nucleus. May function as a transcription factor downstream of MPK1 that is subject to activation by the MPK1 mitogen-activated protein kinase pathway. Binds to the DNA sequence 5'-CTA[TA](4)TAG-3'. At least some RML1 target genes are involved in cell wall biosynthesis. This chain is Transcription factor RLM1 (RLM1), found in Saccharomyces cerevisiae (strain ATCC 204508 / S288c) (Baker's yeast).